We begin with the raw amino-acid sequence, 971 residues long: Nuclear factor NF-kappa-B p105 subunit (971 aa).

The 326-residue stretch at Pro40–Met365 folds into the RHD domain. S-nitrosocysteine; alternate is present on Cys59. Cys59 is lipidated: S-(15-deoxy-Delta12,14-prostaglandin J2-9-yl)cysteine; alternate. Lys323 participates in a covalent cross-link: Glycyl lysine isopeptide (Lys-Gly) (interchain with G-Cter in SUMO2). Ser335 bears the Phosphoserine; by PKA mark. The short motif at Gln358–Lys363 is the Nuclear localization signal element. The segment at Asp370–Gly392 is GRR. An interaction with CFLAR region spans residues Ile433–Ile971. Lys438 is modified (N6-acetyllysine; by EP300). Positions Asn439–Ala470 are disordered. At Ser447 the chain carries Phosphoserine. ANK repeat units lie at residues Asn538–Ser567, Leu577–Leu606, Trp610–Leu639, Glu646–Ala675, Ser680–Ser710, and Asp714–Val743. The tract at residues Glu646–Ser680 is essential for interaction with HIF1AN. The residue at position 674 (Asn674) is a (3S)-3-hydroxyasparagine; by HIF1AN. A Phosphoserine modification is found at Ser755. One copy of the ANK 7 repeat lies at Pro767 to Asp797. The region spanning Gln801 to Phe888 is the Death domain. The residue at position 896 (Ser896) is a Phosphoserine. A Phosphoserine; by GSK3-beta; in vitro modification is found at Ser910. Ser926 carries the phosphoserine modification. Residues Ser930 and Ser935 each carry the phosphoserine; by IKKB modification. At Ser940 the chain carries Phosphoserine. Phosphothreonine is present on Thr946.

In terms of assembly, component of the NF-kappa-B p65-p50 complex. Homodimer; component of the NF-kappa-B p50-p50 complex. Component of the NF-kappa-B p105-p50 complex. Component of the NF-kappa-B p50-c-Rel complex. Component of a complex consisting of the NF-kappa-B p50-p50 homodimer and BCL3. Also interacts with MAP3K8. NF-kappa-B p50 subunit interacts with NCOA3 coactivator, which may coactivate NF-kappa-B dependent expression via its histone acetyltransferase activity. Interacts with TSC22D3; this interaction prevents nuclear translocation and DNA-binding. Interacts with SPAG9 and UNC5CL. NFKB1/p105 interacts with CFLAR; the interaction inhibits p105 processing into p50. NFKB1/p105 forms a ternary complex with MAP3K8 and TNIP2. Interacts with GSK3B; the interaction prevents processing of p105 to p50. NFKB1/p50 interacts with NFKBIE. NFKB1/p50 interacts with NFKBIZ. Nuclear factor NF-kappa-B p50 subunit interacts with NFKBID. Directly interacts with MEN1. Interacts with HIF1AN. Interacts with FEM1AA; interaction is direct. Generation of the NF-kappa-B p50 (Nuclear factor NF-kappa-B p50 subunit) transcription factor takes place both cotranslationally and post-translationally via non-mutually exclusive mechanisms. A cotranslational processing allows the production of both p50 and p105 (Nuclear factor NF-kappa-B p105 subunit) from a single NFKB1 mRNA. While translation occurs, the particular unfolded structure after the GRR repeat region acts as a substrate for the proteasome, promoting degradation of the C-terminus. The GRR acts as a proteasomal 'stop signal', protecting the region upstream of the GRR from degradation and promoting generation of p50. It is unclear if limited proteasome degradation during cotranslational processing depends on ubiquitination. NF-kappa-B p50 is also generated post-translationally following ubiquitination by the KPC complex, leading to limited processing by the proteasome downstream of the GRR region, thereby generating p50. Post-translationally, phosphorylation at the C-terminus by IKBKB/IKKB acts as a signal for ubiquitination and promotes either complete degradation or processing to generate the NF-kappa-B p50 (Nuclear factor NF-kappa-B p50 subunit). Phosphorylation at Ser-910 primes p105 for proteolytic processing in response to TNF-alpha stimulation. Phosphorylation at Ser-926, Ser-930 and Ser-935 are required for BTRC/BTRCP-mediated ubiquitination and proteolysis. Phosphorylation at Ser-930 is also required for ubiquitination by the KPC complex and limited processing to generate NF-kappa-B p50 (Nuclear factor NF-kappa-B p50 subunit). In terms of processing, polyubiquitinated at multiple Lys residues in the C-terminus. Polyubiquitinated by the SCF(FBXW11) and SCF(BTRC) complexes following phosphorylation at Ser-926, Ser-930 and Ser-935, leading to its complete degradation. In contrast, polyubiquitination by the KPC complex following phosphorylation at Ser-930 leads to limited proteosomal processing and generation of the active NF-kappa-B p50 (Nuclear factor NF-kappa-B p50 subunit). S-nitrosylation of Cys-59 affects DNA binding. Post-translationally, the covalent modification of cysteine by 15-deoxy-Delta12,14-prostaglandin-J2 is autocatalytic and reversible. It may occur as an alternative to other cysteine modifications, such as S-nitrosylation and S-palmitoylation.

The protein resides in the cytoplasm. It localises to the nucleus. NF-kappa-B is a pleiotropic transcription factor present in almost all cell types and is the endpoint of a series of signal transduction events that are initiated by a vast array of stimuli related to many biological processes such as inflammation, immunity, differentiation, cell growth, tumorigenesis and apoptosis. NF-kappa-B is a homo- or heterodimeric complex formed by the Rel-like domain-containing proteins RELA/p65, RELB, NFKB1/p105, NFKB1/p50, REL and NFKB2/p52 and the heterodimeric p65-p50 complex appears to be most abundant one. The dimers bind at kappa-B sites in the DNA of their target genes and the individual dimers have distinct preferences for different kappa-B sites that they can bind with distinguishable affinity and specificity. Different dimer combinations act as transcriptional activators or repressors, respectively. NF-kappa-B is controlled by various mechanisms of post-translational modification and subcellular compartmentalization as well as by interactions with other cofactors or corepressors. NF-kappa-B complexes are held in the cytoplasm in an inactive state complexed with members of the NF-kappa-B inhibitor (I-kappa-B) family. In a conventional activation pathway, I-kappa-B is phosphorylated by I-kappa-B kinases (IKKs) in response to different activators, subsequently degraded thus liberating the active NF-kappa-B complex which translocates to the nucleus. NF-kappa-B heterodimeric p65-p50 and RelB-p50 complexes are transcriptional activators. The NF-kappa-B p50-p50 homodimer is a transcriptional repressor, but can act as a transcriptional activator when associated with BCL3. NFKB1 appears to have dual functions such as cytoplasmic retention of attached NF-kappa-B proteins by p105 and generation of p50 by a cotranslational processing. The proteasome-mediated process ensures the production of both p50 and p105 and preserves their independent function, although processing of NFKB1/p105 also appears to occur post-translationally. p50 binds to the kappa-B consensus sequence 5'-GGRNNYYCC-3', located in the enhancer region of genes involved in immune response and acute phase reactions. Plays a role in the regulation of apoptosis. In a complex with MAP3K8, NFKB1/p105 represses MAP3K8-induced MAPK signaling; active MAP3K8 is released by proteasome-dependent degradation of NFKB1/p105. In terms of biological role, P105 is the precursor of the active p50 subunit (Nuclear factor NF-kappa-B p50 subunit) of the nuclear factor NF-kappa-B. Acts as a cytoplasmic retention of attached NF-kappa-B proteins by p105. Functionally, constitutes the active form, which associates with RELA/p65 to form the NF-kappa-B p65-p50 complex to form a transcription factor. Together with RELA/p65, binds to the kappa-B consensus sequence 5'-GGRNNYYCC-3', located in the enhancer region of genes involved in immune response and acute phase reactions. Its function is as follows. Isoform 3 (p98) (but not p84 or p105) acts as a transactivator of NF-kappa-B-regulated gene expression. Acts as an inhibitor of transactivation of p50 NF-kappa-B subunit, probably by sequestering it in the cytoplasm. The protein is Nuclear factor NF-kappa-B p105 subunit (Nfkb1) of Mus musculus (Mouse).